The following is a 179-amino-acid chain: Peptide deformylase (179 aa).

C102 and H144 together coordinate Fe cation. The active site involves E145. H148 serves as a coordination point for Fe cation.

Belongs to the polypeptide deformylase family. Requires Fe(2+) as cofactor.

The enzyme catalyses N-terminal N-formyl-L-methionyl-[peptide] + H2O = N-terminal L-methionyl-[peptide] + formate. In terms of biological role, removes the formyl group from the N-terminal Met of newly synthesized proteins. Requires at least a dipeptide for an efficient rate of reaction. N-terminal L-methionine is a prerequisite for activity but the enzyme has broad specificity at other positions. The polypeptide is Peptide deformylase (Wolbachia sp. subsp. Brugia malayi (strain TRS)).